We begin with the raw amino-acid sequence, 852 residues long: DNA mismatch repair protein MutS (852 aa).

615 to 622 contributes to the ATP binding site; sequence GPNMAGKS.

Belongs to the DNA mismatch repair MutS family.

Its function is as follows. This protein is involved in the repair of mismatches in DNA. It is possible that it carries out the mismatch recognition step. This protein has a weak ATPase activity. The sequence is that of DNA mismatch repair protein MutS from Thermodesulfovibrio yellowstonii (strain ATCC 51303 / DSM 11347 / YP87).